The primary structure comprises 352 residues: CRISPR-associated endonuclease Cas1 1 (352 aa).

3 residues coordinate Mn(2+): Glu207, His274, and Glu289.

It belongs to the CRISPR-associated endonuclease Cas1 family. Homodimer, forms a heterotetramer with a Cas2 homodimer. It depends on Mg(2+) as a cofactor. Mn(2+) is required as a cofactor.

Its function is as follows. CRISPR (clustered regularly interspaced short palindromic repeat), is an adaptive immune system that provides protection against mobile genetic elements (viruses, transposable elements and conjugative plasmids). CRISPR clusters contain spacers, sequences complementary to antecedent mobile elements, and target invading nucleic acids. CRISPR clusters are transcribed and processed into CRISPR RNA (crRNA). Acts as a dsDNA endonuclease. Involved in the integration of spacer DNA into the CRISPR cassette. In Saccharolobus solfataricus (strain ATCC 35092 / DSM 1617 / JCM 11322 / P2) (Sulfolobus solfataricus), this protein is CRISPR-associated endonuclease Cas1 1.